A 432-amino-acid chain; its full sequence is Glutamyl-tRNA reductase (432 aa).

Substrate-binding positions include 55-58 (TCNR), Ser-114, 119-121 (ETQ), and Gln-125. Cys-56 functions as the Nucleophile in the catalytic mechanism. 194–199 (GAGEMI) is a binding site for NADP(+).

It belongs to the glutamyl-tRNA reductase family. In terms of assembly, homodimer.

The enzyme catalyses (S)-4-amino-5-oxopentanoate + tRNA(Glu) + NADP(+) = L-glutamyl-tRNA(Glu) + NADPH + H(+). Its pathway is porphyrin-containing compound metabolism; protoporphyrin-IX biosynthesis; 5-aminolevulinate from L-glutamyl-tRNA(Glu): step 1/2. Its function is as follows. Catalyzes the NADPH-dependent reduction of glutamyl-tRNA(Glu) to glutamate 1-semialdehyde (GSA). The sequence is that of Glutamyl-tRNA reductase from Burkholderia thailandensis (strain ATCC 700388 / DSM 13276 / CCUG 48851 / CIP 106301 / E264).